We begin with the raw amino-acid sequence, 1346 residues long: MVSRSNEGPEAPHPASRTPGAPAKGRLTRLGSSPSKRDDKAKDDRMGKTSAKDVAELKDYQLGDCLGRGAFGSVYRALNWNTGETVAVKQIKLADLPKSELRVIMLEIDLLKNLDHPNIVKYQGFVKSAETLNIILEYCENGSLHSIAKNFGRFPETLVGVYMSQVLHGLLYLHDQGVIHRDIKGANILTTKEGLVKLADFGVASRTTGLSESSVVGTPYWMAPEVIELSGATTASDIWSLGCTVIELLEGKPPYYNLQPMPALFRIVNDDHPPLPQGASPAVKDFLMQCFQKDPNLRVSARKLLKHPWIVNARRSDSVVPKKSTEYEEAVKSVQEWNEALRSPESNALRRGTRNENQNPPSLRLDTRHTPTKVTLPSPVSRIVADKFSSPSSGEEDNWDDDFATAISPSALQLPHLRPHDNFGGMLSSEKLKAFASLDGTVLKSDESFEESDDPFKGSLLAGEHDPLKTIRPPPSQQANSGTSQSQNGPYGAHMRRGPPLNTAITPVYGGQMLQNSSSPIRQQRPPLFYKENSVEDYSDLISANEDVLDRKISAFQESDEHKDLADTGRSREVIRYQSSYEQEDTPRIGRQISVKRYRGTVEIQQFAENEHDEDFSDILGVDGVTLDKAESDDGSNKSTLMLNTKLSNNSWLGDLDDEDDPFALLEEGLDETDLEANIARDKHARLRSQVEGLVGSLKTSQDEEVLGDISEQLLAVFCDFPETKNIIISAHGMLPILEILDLCRRRDITLCLLKIVNAIIYDDYEIQENLCFVGGIPIINEFAAKKYPREIRLEAAAFVQQMYQTSTLTLQMFVSAGGLNVLVEFLEDDYEDERDLVLVGVNGIWSVFELQGSTPKNDFCRILSRSSVLDPLSLVLSRVLDEEGELAEVVEGRIANIFFIFSQAENHVKEMVSERTVLHRVLKELKRMTPAHQITMLKFIKNLSMLSTTLDSLQNSNAIDVLTDLLRSTIKRPHFREVSNQILNTIYNMCRLNKSRQEDAALNGIVPLLQKIVKTERPLKEFALPILCDMAHSGKVGRRELWRNKGLAFYISLLSDPYWQVTALDAIFIWLQEETAKVEEHLLENRYDQPSFTDAIVRCLTLSKANAFENILEPLQKLLRLSPPIASTLARPDLFSRLGQKLHHSKAAVRLNLLRIISSICDSSEQQGGLLASYGLLDSIRELEHDPAILVRDMAGKLIQSSERNDSYGLCKLKPNVRRGSTSATSPGLLANQSAPVTPQLSRQNQSKGYYDSRETQRRPRSAISGSALALRPGSRDGPTPGIVGGANGSAGASRNRIARGVSNRLSHIELLPNDDDRIPSSITRRSSVLPRRRRLTQFEAERGS.

The interval 1–50 is disordered; it reads MVSRSNEGPEAPHPASRTPGAPAKGRLTRLGSSPSKRDDKAKDDRMGKTS. A compositionally biased stretch (basic and acidic residues) spans 35-50; sequence SKRDDKAKDDRMGKTS. Residues 60-310 form the Protein kinase domain; it reads YQLGDCLGRG…ARKLLKHPWI (251 aa). ATP is bound by residues 66-74 and lysine 89; that span reads LGRGAFGSV. Catalysis depends on aspartate 182, which acts as the Proton acceptor. 3 disordered regions span residues 342 to 380, 446 to 497, and 1211 to 1295; these read RSPE…PSPV, DESF…HMRR, and LCKL…AGAS. Polar residues-rich tracts occupy residues 477-489 and 1220-1249; these read QQAN…SQNG and RGST…NQSK.

It belongs to the protein kinase superfamily. Ser/Thr protein kinase family. CDC7 subfamily. The cofactor is Mg(2+).

It catalyses the reaction L-seryl-[protein] + ATP = O-phospho-L-seryl-[protein] + ADP + H(+). The enzyme catalyses L-threonyl-[protein] + ATP = O-phospho-L-threonyl-[protein] + ADP + H(+). In terms of biological role, required for early events during cytokinesis including localization of cytoskeletal components to the cytokinetic ring. The chain is Cytokinesis protein sepH from Emericella nidulans (strain FGSC A4 / ATCC 38163 / CBS 112.46 / NRRL 194 / M139) (Aspergillus nidulans).